Here is a 295-residue protein sequence, read N- to C-terminus: HTH-type transcriptional regulator TdfR (295 aa).

The HTH lysR-type domain maps to 1-58 (MEFRQLRYFVAAAEEGNVGAAARRLHISQPPVTRQIHALEQHLGVLLFERSARGVQLT). Positions 18 to 37 (VGAAARRLHISQPPVTRQIH) form a DNA-binding region, H-T-H motif.

The protein belongs to the LysR transcriptional regulatory family.

It is found in the cytoplasm. In terms of biological role, involved in the regulation of 3-chlorocatechol degradation. Transcriptional regulator of tfdB expression. Acts as a repressor in the absence of its effector (either 2-cis-chlorodiene lactone or chloromaleylacetate) but acts as an activator when its effector is present. This chain is HTH-type transcriptional regulator TdfR (tfdR), found in Cupriavidus pinatubonensis (strain JMP 134 / LMG 1197) (Cupriavidus necator (strain JMP 134)).